A 1040-amino-acid chain; its full sequence is Putative protein tag-76 (1040 aa).

Residues 1–15 (MSRRNATSFVDNNTL) are compositionally biased toward polar residues. Disordered stretches follow at residues 1–61 (MSRR…GSVS) and 322–367 (RTSK…PGAN). Over residues 16–32 (TSSGISGSGSMSPPITS) the composition is skewed to low complexity. Positions 33 to 50 (RPASGQASPLTSNGSLSP) are enriched in polar residues. Gly residues predominate over residues 333–356 (GPGGPGGPGGYRGGRGGGRGGSYG). Residues 379 to 486 (FTMDTLSRDT…LPMEHCLIDS (108 aa)) form the PAZ domain. The region spanning 660 to 966 (CIIVVLQSKN…VATRARCHVK (307 aa)) is the Piwi domain.

This chain is Putative protein tag-76 (tag-76), found in Caenorhabditis elegans.